A 654-amino-acid polypeptide reads, in one-letter code: Protein LYK2 (654 aa).

The first 25 residues, 1–25 (MAVSVSKQYMTSLVVILLFISLSSL), serve as a signal peptide directing secretion. At 26-241 (SPTSTSHSCD…PSKKKRSKMK (216 aa)) the chain is on the extracellular side. Disulfide bonds link Cys-50-Cys-102, Cys-57-Cys-163, and Cys-100-Cys-161. Asn-103, Asn-170, Asn-193, and Asn-204 each carry an N-linked (GlcNAc...) asparagine glycan. Residues 177–217 (YPVGVRDSVSSLAVRFNTTEDAIVSANNKSGVVPLKPALIP) form a LysM; degenerate repeat. A disordered region spans residues 218-238 (LDHKPEKQGSRKRNPSKKKRS). A compositionally biased stretch (basic residues) spans 227–238 (SRKRNPSKKKRS). A helical membrane pass occupies residues 242–262 (LMIAVSSAIAGVCGLVTLMVF). The Cytoplasmic segment spans residues 263–654 (GYLHWKKETQ…PLVKKSSIID (392 aa)). Positions 324-619 (TPRKPVLEIY…EIAERVSRLV (296 aa)) constitute a Protein kinase domain. ATP is bound by residues 330–338 (LEIYAFEEL) and Lys-368.

The protein belongs to the protein kinase superfamily. Ser/Thr protein kinase family.

Its subcellular location is the cell membrane. Its function is as follows. May recognize microbe-derived N-acetylglucosamine (NAG)-containing ligands. The sequence is that of Protein LYK2 (LYK2) from Arabidopsis thaliana (Mouse-ear cress).